Consider the following 143-residue polypeptide: Large ribosomal subunit protein uL11 (143 aa).

It belongs to the universal ribosomal protein uL11 family. As to quaternary structure, part of the ribosomal stalk of the 50S ribosomal subunit. Interacts with L10 and the large rRNA to form the base of the stalk. L10 forms an elongated spine to which L12 dimers bind in a sequential fashion forming a multimeric L10(L12)X complex. One or more lysine residues are methylated.

Functionally, forms part of the ribosomal stalk which helps the ribosome interact with GTP-bound translation factors. This chain is Large ribosomal subunit protein uL11, found in Borreliella burgdorferi (strain ATCC 35210 / DSM 4680 / CIP 102532 / B31) (Borrelia burgdorferi).